Consider the following 546-residue polypeptide: Chaperonin GroEL 2 (546 aa).

ATP contacts are provided by residues threonine 30 to proline 33, lysine 51, aspartate 87 to threonine 91, glycine 415, and aspartate 495. The tract at residues aspartate 527 to phenylalanine 546 is disordered. A compositionally biased stretch (gly residues) spans glycine 535 to phenylalanine 546.

Belongs to the chaperonin (HSP60) family. In terms of assembly, forms a cylinder of 14 subunits composed of two heptameric rings stacked back-to-back. Interacts with the co-chaperonin GroES.

It localises to the cytoplasm. The catalysed reaction is ATP + H2O + a folded polypeptide = ADP + phosphate + an unfolded polypeptide.. Functionally, together with its co-chaperonin GroES, plays an essential role in assisting protein folding. The GroEL-GroES system forms a nano-cage that allows encapsulation of the non-native substrate proteins and provides a physical environment optimized to promote and accelerate protein folding. The chain is Chaperonin GroEL 2 from Burkholderia ambifaria (strain ATCC BAA-244 / DSM 16087 / CCUG 44356 / LMG 19182 / AMMD) (Burkholderia cepacia (strain AMMD)).